A 423-amino-acid polypeptide reads, in one-letter code: Diels-Alderase cheD (423 aa).

The first 18 residues, Met1–Ala18, serve as a signal peptide directing secretion. Asn84 and Asn132 each carry an N-linked (GlcNAc...) asparagine glycan.

It belongs to the Diels-Alderase family.

Its pathway is secondary metabolite biosynthesis. Its function is as follows. Diels-Alderase; part of the gene cluster that mediates the biosynthesis of chaetoglobosin A which has a unique inhibitory activity against actin polymerization in mammalian cells. Chaetoglobosin A and its intermediates are involved in the morphological differentiation of C.globosum. The first step of the pathway is the synthesis of prochaetoglobosin I via condensation of one acetyl-CoA, 8 malonyl-CoA, and a L-tryptophan molecule by the PKS-NRPS hybrid synthetase cheA, followed by reduction of backbone double bond to install desired geometry by the enoyl reductase cheB. Further multiple oxidation steps performed by the cytochrome P450 monooxygenases cheE and cheG, as well as by the FAD-linked oxidoreductase cheF, lead to the formation of chaetoglobosin A. Depending on the order of action of these reductases, distinct intermediates can be identified. Within the pathway, the cytochrome P450 monooxygenase cheE catalyzes a stereospecific epoxidation on prochaetoglobosin I, cytoglobosin D, and chaetoglobosin J intermediates. The FAD-linked oxidoreductase cheF performs dehydrogenation of the C-20 hydroxyl groups in the 20-dihyrochaetoglobosin A and cytoglobosin D intermediates. Finally, the cytochrome P450 monooxygenase cheG can catalyze the stereospecific dihydroxylation of prochaetoglobosin I and prochaetoglobosin IV at C-19 and C-20, respectively. The Diels-Alderase cheD may play a role in the post-PKS-NRPS biosynthetic steps catalyzing Diels-Alder cyclization. In Chaetomium globosum (strain ATCC 6205 / CBS 148.51 / DSM 1962 / NBRC 6347 / NRRL 1970) (Soil fungus), this protein is Diels-Alderase cheD.